The following is a 369-amino-acid chain: Immunoglobulin superfamily member 5 (369 aa).

An N-terminal signal peptide occupies residues 1 to 24 (MEGSWRDVLAVLVILAQLTVSGSS). Ig-like V-type domains follow at residues 25 to 125 (YQII…LSVQ) and 128 to 217 (GTLN…LTVN). Residues 25 to 239 (YQIIEGPRNV…GEGQALPTWA (215 aa)) lie on the Extracellular side of the membrane. N-linked (GlcNAc...) asparagine glycans are attached at residues asparagine 33 and asparagine 45. Residues cysteine 46 and cysteine 109 are joined by a disulfide bond. Residues asparagine 146, asparagine 196, and asparagine 217 are each glycosylated (N-linked (GlcNAc...) asparagine). Residues cysteine 149 and cysteine 201 are joined by a disulfide bond. Residues 240 to 260 (IILLAVAFSLLLILIIALIII) form a helical membrane-spanning segment. At 261–369 (FCCCCVSRRE…PQKIRNVTIV (109 aa)) the chain is on the cytoplasmic side. Residues 321–354 (PKSGEVSLPEQRSSLPQQELDKHRPSPVTHPRVS) are disordered.

Belongs to the immunoglobulin superfamily. In terms of assembly, interacts with MAGI1 at tight junctions, forms a tripartite complex with NPHS1. Interacts with LNX1 isoform 2 via its PDZ 2 domain, it may also interact with other isoforms containing this domain. As to expression, in kidney, it is found in glomeruli and in the proximal tubules (at protein level).

It is found in the apical cell membrane. It localises to the cell junction. The protein localises to the tight junction. Functionally, provides, together with MAGI1, an adhesion machinery at tight junctions, which may regulate the permeability of kidney glomerulus and small intestinal epithelial cells. Mediates calcium-independent homophilic cell adhesion. In testis, it may function as a cell adhesion molecule rather than a tight-junction protein. It may participate in the adhesion between spermatogonia-spermatogonia, spermatogonia-Sertoli cells, and Sertoli cells-Sertoli cells. The protein is Immunoglobulin superfamily member 5 (Igsf5) of Rattus norvegicus (Rat).